Here is a 127-residue protein sequence, read N- to C-terminus: Fumarate reductase subunit C (127 aa).

A run of 3 helical transmembrane segments spans residues 30–50, 67–87, and 107–127; these read ATVL…GSLV, IVVA…QTFF, and IIVL…LIVM.

It belongs to the FrdC family. In terms of assembly, part of an enzyme complex containing four subunits: a flavoprotein (FrdA), an iron-sulfur protein (FrdB), and two hydrophobic anchor proteins (FrdC and FrdD).

It is found in the cell inner membrane. Functionally, anchors the catalytic components of the fumarate reductase complex to the cell membrane, binds quinones. The sequence is that of Fumarate reductase subunit C from Vibrio campbellii (strain ATCC BAA-1116).